We begin with the raw amino-acid sequence, 77 residues long: Acyl carrier protein (77 aa).

The Carrier domain maps to serine 2 to threonine 77. Position 37 is an O-(pantetheine 4'-phosphoryl)serine (serine 37).

This sequence belongs to the acyl carrier protein (ACP) family. In terms of processing, 4'-phosphopantetheine is transferred from CoA to a specific serine of apo-ACP by AcpS. This modification is essential for activity because fatty acids are bound in thioester linkage to the sulfhydryl of the prosthetic group.

The protein localises to the cytoplasm. Its pathway is lipid metabolism; fatty acid biosynthesis. Carrier of the growing fatty acid chain in fatty acid biosynthesis. The chain is Acyl carrier protein from Trichlorobacter lovleyi (strain ATCC BAA-1151 / DSM 17278 / SZ) (Geobacter lovleyi).